Consider the following 282-residue polypeptide: UPF0759 protein YunF (282 aa).

Belongs to the UPF0759 family.

This chain is UPF0759 protein YunF (yunF), found in Bacillus subtilis (strain 168).